The chain runs to 206 residues: tRNA(Phe) 7-((3-amino-3-carboxypropyl)-4-demethylwyosine(37)-N(4))-methyltransferase 2 (206 aa).

Belongs to the TYW3 family.

The catalysed reaction is 4-demethyl-7-[(3S)-3-amino-3-carboxypropyl]wyosine(37) in tRNA(Phe) + S-adenosyl-L-methionine = 7-[(3S)-3-amino-3-carboxypropyl]wyosine(37) in tRNA(Phe) + S-adenosyl-L-homocysteine + H(+). Its function is as follows. S-adenosyl-L-methionine-dependent methyltransferase that acts as a component of the wyosine derivatives biosynthesis pathway. Probably methylates N-4 position of wybutosine-86 to produce wybutosine-72. The polypeptide is tRNA(Phe) 7-((3-amino-3-carboxypropyl)-4-demethylwyosine(37)-N(4))-methyltransferase 2 (Pyrococcus abyssi (strain GE5 / Orsay)).